The following is a 917-amino-acid chain: Major intrinsically disordered Notch2-binding receptor 1 (917 aa).

Topologically, residues 1 to 892 (MEANQEASLF…AEFRRAKVCK (892 aa)) are cytoplasmic. Disordered stretches follow at residues 337-367 (STYFGPTPVMGTQDTRRCPGRPSKQTPWPAK), 389-410 (SEEKLRYPNSGNQTPNFSGPDR), 457-476 (DKSISCTSGQHSSDTSSVGT), 568-588 (ITNGVSGSKGDKCNRPENVHH), 652-679 (SEAPSDDSASPRVFHAHSGSHGPKLENS), 706-727 (TRPSSRSLTEENSATESKIASI), and 746-783 (NEEEIKDAGPANNKDWHRKSKEADRQYDIPPQHRLPKQ). Over residues 460-476 (ISCTSGQHSSDTSSVGT) the composition is skewed to polar residues. Residues 576–588 (KGDKCNRPENVHH) are compositionally biased toward basic and acidic residues. Serine 712 bears the Phosphoserine mark. Residues 893–913 (IAALITAAACTVILVIVVPIC) traverse the membrane as a helical segment. The Extracellular segment spans residues 914 to 917 (TMKS).

It belongs to the MINAR family. Interacts with NOTCH2; this interaction increases MINAR1 stability. Interacts (via N-terminus) with DEPTOR (via PDZ domain); this interaction may stabilize DEPTOR protein by impairing its ubiquitination.

The protein localises to the cell membrane. In terms of biological role, intrinsically disordered protein which may negatively regulate mTOR signaling pathway by stabilizing the mTOR complex component DEPTOR. Negatively regulates angiogenesis. Negatively regulates cell growth. Negatively regulates neurite outgrowth in hippocampal neurons. The chain is Major intrinsically disordered Notch2-binding receptor 1 (Minar1) from Rattus norvegicus (Rat).